Here is a 201-residue protein sequence, read N- to C-terminus: Dephospho-CoA kinase (201 aa).

Residues 4 to 201 (VIGLTGGIAS…LLDTWSNIEK (198 aa)) form the DPCK domain. An ATP-binding site is contributed by 12-17 (ASGKST).

Belongs to the CoaE family.

The protein localises to the cytoplasm. It carries out the reaction 3'-dephospho-CoA + ATP = ADP + CoA + H(+). It functions in the pathway cofactor biosynthesis; coenzyme A biosynthesis; CoA from (R)-pantothenate: step 5/5. Its function is as follows. Catalyzes the phosphorylation of the 3'-hydroxyl group of dephosphocoenzyme A to form coenzyme A. The chain is Dephospho-CoA kinase from Bacillus licheniformis (strain ATCC 14580 / DSM 13 / JCM 2505 / CCUG 7422 / NBRC 12200 / NCIMB 9375 / NCTC 10341 / NRRL NRS-1264 / Gibson 46).